The chain runs to 229 residues: Protein-L-isoaspartate O-methyltransferase (229 aa).

Ser65 is an active-site residue.

It belongs to the methyltransferase superfamily. L-isoaspartyl/D-aspartyl protein methyltransferase family.

It is found in the cytoplasm. The catalysed reaction is [protein]-L-isoaspartate + S-adenosyl-L-methionine = [protein]-L-isoaspartate alpha-methyl ester + S-adenosyl-L-homocysteine. Its function is as follows. Catalyzes the methyl esterification of L-isoaspartyl residues in peptides and proteins that result from spontaneous decomposition of normal L-aspartyl and L-asparaginyl residues. It plays a role in the repair and/or degradation of damaged proteins. This is Protein-L-isoaspartate O-methyltransferase from Chlorobium phaeovibrioides (strain DSM 265 / 1930) (Prosthecochloris vibrioformis (strain DSM 265)).